An 88-amino-acid chain; its full sequence is Large ribosomal subunit protein bL31B (88 aa).

It belongs to the bacterial ribosomal protein bL31 family. Type B subfamily. As to quaternary structure, part of the 50S ribosomal subunit.

This is Large ribosomal subunit protein bL31B from Leuconostoc mesenteroides subsp. mesenteroides (strain ATCC 8293 / DSM 20343 / BCRC 11652 / CCM 1803 / JCM 6124 / NCDO 523 / NBRC 100496 / NCIMB 8023 / NCTC 12954 / NRRL B-1118 / 37Y).